The primary structure comprises 192 residues: Thymidylate kinase (192 aa).

7-14 (GIDCVGKS) is a binding site for ATP.

It belongs to the thymidylate kinase family.

The enzyme catalyses dTMP + ATP = dTDP + ADP. Its function is as follows. Phosphorylation of dTMP to form dTDP in both de novo and salvage pathways of dTTP synthesis. The sequence is that of Thymidylate kinase from Campylobacter jejuni subsp. doylei (strain ATCC BAA-1458 / RM4099 / 269.97).